Here is a 249-residue protein sequence, read N- to C-terminus: Tetraspanin-18 (249 aa).

Residues 1-13 (MEGDCLSCMKYLM) lie on the Cytoplasmic side of the membrane. A helical transmembrane segment spans residues 14–34 (FVFNFFIFLGGACLLGIGIWV). Over 35 to 49 (MVDPTGFREIVAANP) the chain is Extracellular. The helical transmembrane segment at 50–70 (LLITGAYILLAMGGLLFLLGF) threads the bilayer. At 71–83 (LGCCGAVRENKCL) the chain is on the cytoplasmic side. The chain crosses the membrane as a helical span at residues 84–104 (LLFFFLFILIIFLAELSAAIL). Residues 105–223 (AFIFRGNLTR…AFETYVYLAG (119 aa)) lie on the Extracellular side of the membrane. N-linked (GlcNAc...) asparagine glycans are attached at residues asparagine 111 and asparagine 129. A helical membrane pass occupies residues 224-244 (ALAIGVLAIELFAMIFAMCLF). At 245-249 (RGIIQ) the chain is on the cytoplasmic side.

It belongs to the tetraspanin (TM4SF) family. As to quaternary structure, interacts with ORAI1; this interaction regulates ORAI1 exit from the endoplasmic (ER), and/or Golgi, and trafficking to the cell surface.

The protein localises to the membrane. Plays a role in the cell surface localization of ORAI1 and may participate in the regulation of Ca(2+) signaling and the VWF release in response to inflammatory stimuli. The polypeptide is Tetraspanin-18 (Bos taurus (Bovine)).